Here is a 216-residue protein sequence, read N- to C-terminus: Trimethylamine corrinoid protein 1 (216 aa).

The B12-binding N-terminal domain maps to 1–92; that stretch reads MANKEEIIAK…EMEKRKSQTK (92 aa). Positions 94–216 constitute a B12-binding domain; that stretch reads LGTIVIGTIE…VVSKVKAALL (123 aa). Histidine 107 contacts methylcob(III)alamin.

The protein belongs to the methylamine corrinoid protein family. In terms of assembly, can form a complex with MttB.

It functions in the pathway one-carbon metabolism; methanogenesis from trimethylamine. In terms of biological role, acts probably as a methyl group carrier between MttB and either MtbA or MtaA. The protein is Trimethylamine corrinoid protein 1 (mttC1) of Methanosarcina mazei (strain ATCC BAA-159 / DSM 3647 / Goe1 / Go1 / JCM 11833 / OCM 88) (Methanosarcina frisia).